A 451-amino-acid polypeptide reads, in one-letter code: MWSPEREAQAPTGGDPAGLLPPEWEEDEERMSFLFSAFKRSREVNSTDWDSKMGFWAPLVLSHSRRQGVVRLRLRDLQEAFQRKGSVPLGLATVLQDLLRRGELQRESDFMASVDSSWISWGVGVFLLKPLKWTLSNMLGDHKVPAEEVLVAVELLKEKAEEVYRLYQNSPLSSHPVVALSELSALCANSCPDERTFYLVLLQLQKEKRVTVLEQNGEKIVKFARGPHAKVSPVNDVDVGVYQLMQSEQLLSRKVESLSQESERCKEEARRACRAGKKQLALRSLKAKQRTEKRIEALHAKLDTVQGILDRIYASQTDQMVFNAYQAGVGALKLSMKDVTVEKAESLVDQIQELCDTQDEVSQTLAGGVTNGLDFDSEELEKELDILLQDTTTEPLSLLETPQETTLYTNSVPKPRILDAELEAELEKLSLSEGGLIPSSKSPKRQLEPTL.

The interval 1 to 22 (MWSPEREAQAPTGGDPAGLLPP) is disordered. S232 is modified (phosphoserine). Residues 248–312 (EQLLSRKVES…DTVQGILDRI (65 aa)) adopt a coiled-coil conformation. T409 carries the post-translational modification Phosphothreonine. S411, S432, and S442 each carry phosphoserine. A disordered region spans residues 431-451 (LSEGGLIPSSKSPKRQLEPTL).

The protein belongs to the SNF7 family. Interacts with CHMP4B, but not with VPS25. Interacts with LEMD2 (via C-terminus).

The protein localises to the cytoplasm. Its subcellular location is the nucleus envelope. Functionally, ESCRT-III-like protein required to recruit the ESCRT-III complex to the nuclear envelope (NE) during late anaphase. Together with SPAST, the ESCRT-III complex promotes NE sealing and mitotic spindle disassembly during late anaphase. Recruited to the reforming NE during anaphase by LEMD2. Plays a role in the endosomal sorting pathway. This chain is Charged multivesicular body protein 7 (Chmp7), found in Mus musculus (Mouse).